The primary structure comprises 375 residues: Growth/differentiation factor 8 (375 aa).

An N-terminal signal peptide occupies residues 1 to 18; it reads MQKLQISVYIYLFVLILA. The propeptide occupies 19–266; that stretch reads GPVDLNENSE…VTDTPKRSRR (248 aa). Asn-71 is a glycosylation site (N-linked (GlcNAc...) asparagine). Cystine bridges form between Cys-272/Cys-282, Cys-281/Cys-340, Cys-309/Cys-372, and Cys-313/Cys-374.

Belongs to the TGF-beta family. Homodimer; disulfide-linked. Interacts with WFIKKN2, leading to inhibit its activity. Interacts with FSTL3. In terms of processing, synthesized as large precursor molecule that undergoes proteolytic cleavage to generate an N-terminal propeptide and a disulfide linked C-terminal dimer, which is the biologically active molecule. The circulating form consists of a latent complex of the C-terminal dimer and other proteins, including its propeptide, which maintain the C-terminal dimer in a latent, inactive state. Ligand activation requires additional cleavage of the prodomain by a tolloid-like metalloproteinase.

The protein localises to the secreted. Acts specifically as a negative regulator of skeletal muscle growth. The sequence is that of Growth/differentiation factor 8 (MSTN) from Equus caballus (Horse).